A 453-amino-acid polypeptide reads, in one-letter code: MLEKAERQRKAAPDQQRSAGYMPGFGNDFETESLPGSLPQGQNSPQKCNYGLYAEQLSGSPFTAPRGTNERSWLYRIRPSVRHTGRFTKIDYPHWKTAPHTPEHSLALGQLRWSPLPAPSQSLTFLQGIRTMTTAGDALTQVGMAAHAYAFNADMVDDYFFNADGELLIVPETGAFQVFTELGRIDVEPSEICLVPRGMMFKVTRLGDEKVWRGYICENYGAKFTLPDRGPIGANCLANPRDFKTPVAAYEDKETPCRVQVKWCGSFHTAEIAHSPLDVVAWHGNYAPYKYDLKTFSPVGAILFDHPDPSIFTVLTAPSGEEGTANVDFVIFPPRWLVAEHTFRPPWYHRNIMSEFMGLIHGRYDAKEEGFVPGGMSLHNMMLAHGPDFSGFEKASNGELKPVKLDNTMAFMFETRFPQQLTTFAAELETLQDDYIDCWSGLERKFDGTPGIK.

Basic and acidic residues predominate over residues Met-1–Ala-12. The disordered stretch occupies residues Met-1–Asn-43. His-306 serves as the catalytic Proton acceptor. 2 residues coordinate Fe cation: His-349 and Glu-355. Homogentisate contacts are provided by Tyr-364 and His-385. Fe cation is bound at residue His-385.

It belongs to the homogentisate dioxygenase family. In terms of assembly, hexamer; dimer of trimers. The cofactor is Fe cation.

The enzyme catalyses homogentisate + O2 = 4-maleylacetoacetate + H(+). It functions in the pathway amino-acid degradation; L-phenylalanine degradation; acetoacetate and fumarate from L-phenylalanine: step 4/6. Functionally, involved in the catabolism of homogentisate (2,5-dihydroxyphenylacetate or 2,5-OH-PhAc), a central intermediate in the degradation of phenylalanine and tyrosine. Catalyzes the oxidative ring cleavage of the aromatic ring of homogentisate to yield maleylacetoacetate. The protein is Homogentisate 1,2-dioxygenase of Sinorhizobium medicae (strain WSM419) (Ensifer medicae).